The sequence spans 346 residues: Biotin synthase (346 aa).

The region spanning 38–256 is the Radical SAM core domain; that stretch reads QQVQVSTLLS…IAVARIMMPT (219 aa). The [4Fe-4S] cluster site is built by Cys-53, Cys-57, and Cys-60. Residues Cys-97, Cys-128, Cys-188, and Arg-260 each coordinate [2Fe-2S] cluster.

This sequence belongs to the radical SAM superfamily. Biotin synthase family. In terms of assembly, homodimer. [4Fe-4S] cluster is required as a cofactor. [2Fe-2S] cluster serves as cofactor.

The enzyme catalyses (4R,5S)-dethiobiotin + (sulfur carrier)-SH + 2 reduced [2Fe-2S]-[ferredoxin] + 2 S-adenosyl-L-methionine = (sulfur carrier)-H + biotin + 2 5'-deoxyadenosine + 2 L-methionine + 2 oxidized [2Fe-2S]-[ferredoxin]. The protein operates within cofactor biosynthesis; biotin biosynthesis; biotin from 7,8-diaminononanoate: step 2/2. In terms of biological role, catalyzes the conversion of dethiobiotin (DTB) to biotin by the insertion of a sulfur atom into dethiobiotin via a radical-based mechanism. The protein is Biotin synthase of Salmonella gallinarum (strain 287/91 / NCTC 13346).